The following is a 168-amino-acid chain: Small ribosomal subunit protein uS5 (168 aa).

Positions 13-76 (LAEKLIAVNR…EKARRNMINV (64 aa)) constitute an S5 DRBM domain.

This sequence belongs to the universal ribosomal protein uS5 family. In terms of assembly, part of the 30S ribosomal subunit. Contacts proteins S4 and S8.

Functionally, with S4 and S12 plays an important role in translational accuracy. In terms of biological role, located at the back of the 30S subunit body where it stabilizes the conformation of the head with respect to the body. This Pseudoalteromonas translucida (strain TAC 125) protein is Small ribosomal subunit protein uS5.